The primary structure comprises 1188 residues: uncharacterized protein (1188 aa).

3 consecutive transmembrane segments (helical) span residues 73–93, 878–898, and 1089–1109; these read FVVN…HLLM, IFSV…DSGI, and VIPL…SEFI.

It is found in the membrane. This is an uncharacterized protein from Saccharomyces cerevisiae (strain ATCC 204508 / S288c) (Baker's yeast).